A 369-amino-acid chain; its full sequence is Chaperone protein DnaJ (369 aa).

The 66-residue stretch at 4 to 69 (SYYEILEVEK…KKRALYDRYG (66 aa)) folds into the J domain. The CR-type zinc finger occupies 130–207 (GCKKTIKAQY…CKGKTYILKD (78 aa)). Residues cysteine 143, cysteine 146, cysteine 159, cysteine 162, cysteine 181, cysteine 184, cysteine 195, and cysteine 198 each coordinate Zn(2+). 4 CXXCXGXG motif repeats span residues 143 to 150 (CESCDGTG), 159 to 166 (CKQCNGQG), 181 to 188 (CGACQGKG), and 195 to 202 (CQACKGKT).

This sequence belongs to the DnaJ family. As to quaternary structure, homodimer. It depends on Zn(2+) as a cofactor.

The protein resides in the cytoplasm. In terms of biological role, participates actively in the response to hyperosmotic and heat shock by preventing the aggregation of stress-denatured proteins and by disaggregating proteins, also in an autonomous, DnaK-independent fashion. Unfolded proteins bind initially to DnaJ; upon interaction with the DnaJ-bound protein, DnaK hydrolyzes its bound ATP, resulting in the formation of a stable complex. GrpE releases ADP from DnaK; ATP binding to DnaK triggers the release of the substrate protein, thus completing the reaction cycle. Several rounds of ATP-dependent interactions between DnaJ, DnaK and GrpE are required for fully efficient folding. Also involved, together with DnaK and GrpE, in the DNA replication of plasmids through activation of initiation proteins. The protein is Chaperone protein DnaJ of Helicobacter pylori (strain J99 / ATCC 700824) (Campylobacter pylori J99).